The following is a 347-amino-acid chain: Monopolin complex subunit LRS4 (347 aa).

Positions 46 to 118 (KKVVDETLFL…QISVDKHNKE (73 aa)) form a coiled coil. Residues 112–130 (VDKHNKERTPSTGRDEQQR) are compositionally biased toward basic and acidic residues. 2 disordered regions span residues 112 to 183 (VDKH…SLLS) and 208 to 230 (RNDTTSSKIAGKSPSRLSALQKS). 2 stretches are compositionally biased toward polar residues: residues 131-140 (NSKAAHTSKP) and 155-172 (NNQTNDRGGNDPDSPTSQ). 2 positions are modified to phosphoserine: S168 and S230.

As to quaternary structure, component of the monopolin complex composed of at least CSM1, LRS4 and MAM1. The complex associates with the kinetochore. Phosphorylated by CDC5. This phosphorylation is required for the location to the kinetochores during late pachytene.

The protein localises to the nucleus. It localises to the nucleolus. Its subcellular location is the chromosome. The protein resides in the centromere. Component of the monopolin complex which promotes monoorientation during meiosis I, required for chromosome segregation during meiosis. Involved in rDNA silencing. This Saccharomyces cerevisiae (strain ATCC 204508 / S288c) (Baker's yeast) protein is Monopolin complex subunit LRS4 (LRS4).